A 178-amino-acid polypeptide reads, in one-letter code: NADH-ubiquinone oxidoreductase chain 6 (178 aa).

5 helical membrane-spanning segments follow: residues 1-21 (MMTYIVTILSTIFVVSFVGFS), 25-45 (SPIYGGVGLIVSGGVGCGIVL), 48-68 (GGSFLGLMVFLIYLGGMLVVF), 89-109 (VLLTFLLGLVGEVVLMIYLLL), and 152-172 (YGYWLVIVSGWSLVTCIIVVM).

The protein belongs to the complex I subunit 6 family.

Its subcellular location is the mitochondrion membrane. The catalysed reaction is a ubiquinone + NADH + 5 H(+)(in) = a ubiquinol + NAD(+) + 4 H(+)(out). In terms of biological role, core subunit of the mitochondrial membrane respiratory chain NADH dehydrogenase (Complex I) that is believed to belong to the minimal assembly required for catalysis. Complex I functions in the transfer of electrons from NADH to the respiratory chain. The immediate electron acceptor for the enzyme is believed to be ubiquinone. The chain is NADH-ubiquinone oxidoreductase chain 6 (MT-ND6) from Pseudosoriculus fumidus (Taiwanese brown-toothed shrew).